The chain runs to 113 residues: MLIAGTLCVCAAVISAVFGTWALIHNQTVDPTQLAMRAMAPPQLAAAIMLAAGGVVALVAVAHTALIVVAVCVTGAVGTLAAGSWQSARYTLRRRATATSCGKNCAGCILSCR.

2 helical membrane passes run 1-21 (MLIA…FGTW) and 48-68 (IMLA…ALIV).

It to M.tuberculosis Rv0039.

The protein localises to the cell membrane. This is an uncharacterized protein from Mycobacterium leprae (strain TN).